Reading from the N-terminus, the 128-residue chain is Large ribosomal subunit protein eL8 (128 aa).

The protein belongs to the eukaryotic ribosomal protein eL8 family. In terms of assembly, part of the 50S ribosomal subunit. Probably part of the RNase P complex.

The protein resides in the cytoplasm. Functionally, multifunctional RNA-binding protein that recognizes the K-turn motif in ribosomal RNA, the RNA component of RNase P, box H/ACA, box C/D and box C'/D' sRNAs. The sequence is that of Large ribosomal subunit protein eL8 from Staphylothermus marinus (strain ATCC 43588 / DSM 3639 / JCM 9404 / F1).